The following is a 305-amino-acid chain: Cytochrome c biogenesis protein CcsA (305 aa).

8 helical membrane passes run 13-33 (IYFS…VYPV), 42-62 (KGII…WFYS), 70-90 (LYES…FIDI), 97-117 (WIGV…TLIL), 135-155 (WLIM…CGSL), 212-232 (YTIV…AVWA), 242-262 (WDPK…YIHI), and 276-296 (VASL…ILGI).

The protein belongs to the CcmF/CycK/Ccl1/NrfE/CcsA family. In terms of assembly, may interact with Ccs1.

The protein localises to the plastid. It localises to the chloroplast thylakoid membrane. Its function is as follows. Required during biogenesis of c-type cytochromes (cytochrome c6 and cytochrome f) at the step of heme attachment. This chain is Cytochrome c biogenesis protein CcsA, found in Welwitschia mirabilis (Tree tumbo).